The primary structure comprises 250 residues: Probable transcriptional regulatory protein Ppha_0657 (250 aa).

The protein belongs to the TACO1 family.

It is found in the cytoplasm. In Pelodictyon phaeoclathratiforme (strain DSM 5477 / BU-1), this protein is Probable transcriptional regulatory protein Ppha_0657.